A 732-amino-acid polypeptide reads, in one-letter code: X-ray repair cross-complementing protein 5 (732 aa).

One can recognise a VWFA domain in the interval 9-231 (AVVLCMDVGF…DEIYSFSESL (223 aa)). Residues 138-165 (LSSRFSKSQLDIIIHSLKKCDISLQFFL) form a leucine-zipper region. The residue at position 144 (K144) is an N6-acetyllysine. K195 is covalently cross-linked (Glycyl lysine isopeptide (Lys-Gly) (interchain with G-Cter in SUMO2)). Positions 253 to 452 (IGSNLSIRIA…KYAPTEAQLN (200 aa)) constitute a Ku domain. S255 and S258 each carry phosphoserine. K265 bears the N6-acetyllysine mark. Phosphoserine is present on S318. The residue at position 332 (K332) is an N6-acetyllysine. Residues K532 and K534 each participate in a glycyl lysine isopeptide (Lys-Gly) (interchain with G-Cter in SUMO2) cross-link. T535 bears the Phosphothreonine mark. Residues K566 and K568 each participate in a glycyl lysine isopeptide (Lys-Gly) (interchain with G-Cter in SUMO2) cross-link. Phosphoserine; by PRKDC occurs at positions 577, 579, and 580. K660 and K665 each carry N6-acetyllysine. Glycyl lysine isopeptide (Lys-Gly) (interchain with G-Cter in SUMO2) cross-links involve residues K669 and K688. T715 carries the phosphothreonine; by PRKDC modification. Residues 720–728 (EEGGDVDDL) carry the EEXXXDL motif motif.

The protein belongs to the ku80 family. As to quaternary structure, heterodimer composed of XRCC5/Ku80 and XRCC6/Ku70; heterodimerization stabilizes XRCC5 protein. Component of the core long-range non-homologous end joining (NHEJ) complex (also named DNA-PK complex) composed of PRKDC, LIG4, XRCC4, XRCC6/Ku70, XRCC5/Ku86 and NHEJ1/XLF. Additional component of the NHEJ complex includes PAXX. Following autophosphorylation, PRKDC dissociates from DNA, leading to formation of the short-range NHEJ complex, composed of LIG4, XRCC4, XRCC6/Ku70, XRCC5/Ku86 and NHEJ1/XLF. The XRCC5-XRCC6 dimer also associates with NAA15, and this complex displays DNA binding activity towards the osteocalcin FGF response element (OCFRE). In addition, XRCC5 binds to the osteoblast-specific transcription factors MSX2 and RUNX2. Interacts with ELF3. Interacts with APLF (via KBM motif). The XRCC5/XRCC6 dimer associates in a DNA-dependent manner with APEX1. Identified in a complex with DEAF1 and XRCC6. Interacts with NR4A3; the DNA-dependent protein kinase complex DNA-PK phosphorylates and activates NR4A3 and prevents NR4A3 ubiquitinylation and degradation. Interacts with RNF138. Interacts with CYREN isoform 1 (CYREN-1) and isoform 4 (CYREN-2) (via KBM motif). Interacts with WRN (via KBM motif). Interacts (via N-terminus) with HSF1 (via N-terminus); this interaction is direct and prevents XRCC5/XRCC6 heterodimeric binding and non-homologous end joining (NHEJ) repair activities induced by ionizing radiation (IR). Interacts with DHX9; this interaction occurs in a RNA-dependent manner. Part of the HDP-RNP complex composed of at least HEXIM1, PRKDC, XRCC5, XRCC6, paraspeckle proteins (SFPQ, NONO, PSPC1, RBM14, and MATR3) and NEAT1 RNA. Interacts with ERCC6. The XRCC5-XRCC6 dimer associates with ALKBH2. Interacts with TPRN; TPRN interacts with a number of DNA damage response proteins, is recruited to sites of DNA damage and may play a role in DNA damage repair. Interacts with ERCC6L2. In terms of assembly, (Microbial infection) Interacts with human T-cell leukemia virus 1/HTLV-1 protein HBZ. In terms of processing, ADP-ribosylated by PARP3. Post-translationally, phosphorylated on serine residues. Phosphorylation by PRKDC may enhance helicase activity. Sumoylated. In terms of processing, ubiquitinated by RNF8 via 'Lys-48'-linked ubiquitination following DNA damage, leading to its degradation and removal from DNA damage sites. Ubiquitinated by RNF138, leading to remove the Ku complex from DNA breaks.

The protein resides in the nucleus. The protein localises to the nucleolus. It localises to the chromosome. Functionally, single-stranded DNA-dependent ATP-dependent helicase that plays a key role in DNA non-homologous end joining (NHEJ) by recruiting DNA-PK to DNA. Required for double-strand break repair and V(D)J recombination. Also has a role in chromosome translocation. The DNA helicase II complex binds preferentially to fork-like ends of double-stranded DNA in a cell cycle-dependent manner. It works in the 3'-5' direction. During NHEJ, the XRCC5-XRRC6 dimer performs the recognition step: it recognizes and binds to the broken ends of the DNA and protects them from further resection. Binding to DNA may be mediated by XRCC6. The XRCC5-XRRC6 dimer acts as a regulatory subunit of the DNA-dependent protein kinase complex DNA-PK by increasing the affinity of the catalytic subunit PRKDC to DNA by 100-fold. The XRCC5-XRRC6 dimer is probably involved in stabilizing broken DNA ends and bringing them together. The assembly of the DNA-PK complex to DNA ends is required for the NHEJ ligation step. The XRCC5-XRRC6 dimer probably also acts as a 5'-deoxyribose-5-phosphate lyase (5'-dRP lyase), by catalyzing the beta-elimination of the 5' deoxyribose-5-phosphate at an abasic site near double-strand breaks. XRCC5 probably acts as the catalytic subunit of 5'-dRP activity, and allows to 'clean' the termini of abasic sites, a class of nucleotide damage commonly associated with strand breaks, before such broken ends can be joined. The XRCC5-XRRC6 dimer together with APEX1 acts as a negative regulator of transcription. In association with NAA15, the XRCC5-XRRC6 dimer binds to the osteocalcin promoter and activates osteocalcin expression. As part of the DNA-PK complex, involved in the early steps of ribosome assembly by promoting the processing of precursor rRNA into mature 18S rRNA in the small-subunit processome. Binding to U3 small nucleolar RNA, recruits PRKDC and XRCC5/Ku86 to the small-subunit processome. Plays a role in the regulation of DNA virus-mediated innate immune response by assembling into the HDP-RNP complex, a complex that serves as a platform for IRF3 phosphorylation and subsequent innate immune response activation through the cGAS-STING pathway. This chain is X-ray repair cross-complementing protein 5 (XRCC5), found in Homo sapiens (Human).